A 332-amino-acid polypeptide reads, in one-letter code: Ketol-acid reductoisomerase (NAD(+)) (332 aa).

One can recognise a KARI N-terminal Rossmann domain in the interval 1–181; sequence MKIYYDQDAD…GATRAGVIQT (181 aa). Residues 24–27, S50, and 82–85 each bind NAD(+); these read YGSQ and DEKQ. Residue H107 is part of the active site. Position 133 (G133) interacts with NAD(+). The 146-residue stretch at 182 to 327 folds into the KARI C-terminal knotted domain; sequence TFKEETETDL…ARLRGMMPWL (146 aa). The Mg(2+) site is built by D190, E194, E226, and E230. S251 contributes to the substrate binding site.

It belongs to the ketol-acid reductoisomerase family. Requires Mg(2+) as cofactor.

The enzyme catalyses (2R)-2,3-dihydroxy-3-methylbutanoate + NAD(+) = (2S)-2-acetolactate + NADH + H(+). It participates in amino-acid biosynthesis; L-isoleucine biosynthesis; L-isoleucine from 2-oxobutanoate: step 2/4. Its pathway is amino-acid biosynthesis; L-valine biosynthesis; L-valine from pyruvate: step 2/4. In terms of biological role, involved in the biosynthesis of branched-chain amino acids (BCAA). Catalyzes an alkyl-migration followed by a ketol-acid reduction of (S)-2-acetolactate (S2AL) to yield (R)-2,3-dihydroxy-isovalerate. In the isomerase reaction, S2AL is rearranged via a Mg-dependent methyl migration to produce 3-hydroxy-3-methyl-2-ketobutyrate (HMKB). In the reductase reaction, this 2-ketoacid undergoes a metal-dependent reduction by NADH to yield (R)-2,3-dihydroxy-isovalerate. This is Ketol-acid reductoisomerase (NAD(+)) from Thermacetogenium phaeum (strain ATCC BAA-254 / DSM 26808 / PB).